The chain runs to 863 residues: Leucine--tRNA ligase (863 aa).

A 'HIGH' region motif is present at residues 42-52; sequence PYPSGKLHMGH. The 'KMSKS' region signature appears at 623–627; sequence KMSKS. Lysine 626 is an ATP binding site.

Belongs to the class-I aminoacyl-tRNA synthetase family.

It localises to the cytoplasm. It carries out the reaction tRNA(Leu) + L-leucine + ATP = L-leucyl-tRNA(Leu) + AMP + diphosphate. The polypeptide is Leucine--tRNA ligase (Paraburkholderia xenovorans (strain LB400)).